Reading from the N-terminus, the 172-residue chain is Large ribosomal subunit protein uL10 (172 aa).

Belongs to the universal ribosomal protein uL10 family. Part of the ribosomal stalk of the 50S ribosomal subunit. The N-terminus interacts with L11 and the large rRNA to form the base of the stalk. The C-terminus forms an elongated spine to which L12 dimers bind in a sequential fashion forming a multimeric L10(L12)X complex.

Functionally, forms part of the ribosomal stalk, playing a central role in the interaction of the ribosome with GTP-bound translation factors. The chain is Large ribosomal subunit protein uL10 from Rhizobium etli (strain ATCC 51251 / DSM 11541 / JCM 21823 / NBRC 15573 / CFN 42).